Here is a 613-residue protein sequence, read N- to C-terminus: Chaperone protein dnaK (613 aa).

This sequence belongs to the heat shock protein 70 family.

The protein localises to the plastid. Its subcellular location is the chloroplast. In terms of biological role, acts as a chaperone. This is Chaperone protein dnaK from Phaeodactylum tricornutum (strain CCAP 1055/1).